A 315-amino-acid polypeptide reads, in one-letter code: Methionyl-tRNA formyltransferase (315 aa).

Positions 2-189 (SESLRIIFAG…LITTLKQLAD (188 aa)) are N-terminal domain. Residue 113-116 (SLLP) coordinates (6S)-5,6,7,8-tetrahydrofolate. The interval 210 to 315 (KEEARIDWSL…EWFVPGNRLA (106 aa)) is C-terminal domain.

This sequence belongs to the Fmt family.

It catalyses the reaction L-methionyl-tRNA(fMet) + (6R)-10-formyltetrahydrofolate = N-formyl-L-methionyl-tRNA(fMet) + (6S)-5,6,7,8-tetrahydrofolate + H(+). Functionally, attaches a formyl group to the free amino group of methionyl-tRNA(fMet). The formyl group appears to play a dual role in the initiator identity of N-formylmethionyl-tRNA by promoting its recognition by IF2 and preventing the misappropriation of this tRNA by the elongation apparatus. This Escherichia coli O6:H1 (strain CFT073 / ATCC 700928 / UPEC) protein is Methionyl-tRNA formyltransferase.